Consider the following 57-residue polypeptide: Protein GnsB (57 aa).

Belongs to the gns family.

Functionally, overexpression increases levels of unsaturated fatty acids and suppresses both the temperature-sensitive fabA6 mutation and cold-sensitive secG null mutation. In Escherichia coli (strain K12), this protein is Protein GnsB (gnsB).